A 345-amino-acid chain; its full sequence is Putative mediator of RNA polymerase II transcription subunit 7 (345 aa).

2 stretches are compositionally biased toward low complexity: residues 1–27 (MNTSQQQQQQQQQQQQQQQQQQQTPQQ) and 88–126 (NNNNNNNNNNNNNNNNNNNNNNNNNNNNNNNNNNNNNNN). 2 disordered regions span residues 1–130 (MNTS…KATT) and 292–315 (TPLPTNITSPTKNLMSPTKLNNSQ).

Belongs to the Mediator complex subunit 7 family. As to quaternary structure, component of the Mediator complex.

Its subcellular location is the nucleus. Component of the Mediator complex, a coactivator involved in the regulated transcription of nearly all RNA polymerase II-dependent genes. Mediator functions as a bridge to convey information from gene-specific regulatory proteins to the basal RNA polymerase II transcription machinery. Mediator is recruited to promoters by direct interactions with regulatory proteins and serves as a scaffold for the assembly of a functional preinitiation complex with RNA polymerase II and the general transcription factors. This Dictyostelium discoideum (Social amoeba) protein is Putative mediator of RNA polymerase II transcription subunit 7 (med7).